The primary structure comprises 147 residues: Endoribonuclease YbeY (147 aa).

His-108, His-112, and His-118 together coordinate Zn(2+).

It belongs to the endoribonuclease YbeY family. Zn(2+) serves as cofactor.

It localises to the cytoplasm. Functionally, single strand-specific metallo-endoribonuclease involved in late-stage 70S ribosome quality control and in maturation of the 3' terminus of the 16S rRNA. The protein is Endoribonuclease YbeY of Sulfurovum sp. (strain NBC37-1).